The primary structure comprises 342 residues: Holliday junction branch migration complex subunit RuvB (342 aa).

The large ATPase domain (RuvB-L) stretch occupies residues 1-184 (MEEDFNIRDH…FGINLHLEYY (184 aa)). ATP contacts are provided by residues L23, R24, G65, K68, T69, T70, 131–133 (EDY), R174, Y184, and R221. T69 is a binding site for Mg(2+). Residues 185–255 (DDDILSNIIS…IANYALEALN (71 aa)) are small ATPAse domain (RuvB-S). The segment at 258-342 (KYGLDEIDNK…YNSQKTLFND (85 aa)) is head domain (RuvB-H). Positions 313 and 318 each coordinate DNA.

It belongs to the RuvB family. In terms of assembly, homohexamer. Forms an RuvA(8)-RuvB(12)-Holliday junction (HJ) complex. HJ DNA is sandwiched between 2 RuvA tetramers; dsDNA enters through RuvA and exits via RuvB. An RuvB hexamer assembles on each DNA strand where it exits the tetramer. Each RuvB hexamer is contacted by two RuvA subunits (via domain III) on 2 adjacent RuvB subunits; this complex drives branch migration. In the full resolvosome a probable DNA-RuvA(4)-RuvB(12)-RuvC(2) complex forms which resolves the HJ.

The protein localises to the cytoplasm. It catalyses the reaction ATP + H2O = ADP + phosphate + H(+). Functionally, the RuvA-RuvB-RuvC complex processes Holliday junction (HJ) DNA during genetic recombination and DNA repair, while the RuvA-RuvB complex plays an important role in the rescue of blocked DNA replication forks via replication fork reversal (RFR). RuvA specifically binds to HJ cruciform DNA, conferring on it an open structure. The RuvB hexamer acts as an ATP-dependent pump, pulling dsDNA into and through the RuvAB complex. RuvB forms 2 homohexamers on either side of HJ DNA bound by 1 or 2 RuvA tetramers; 4 subunits per hexamer contact DNA at a time. Coordinated motions by a converter formed by DNA-disengaged RuvB subunits stimulates ATP hydrolysis and nucleotide exchange. Immobilization of the converter enables RuvB to convert the ATP-contained energy into a lever motion, pulling 2 nucleotides of DNA out of the RuvA tetramer per ATP hydrolyzed, thus driving DNA branch migration. The RuvB motors rotate together with the DNA substrate, which together with the progressing nucleotide cycle form the mechanistic basis for DNA recombination by continuous HJ branch migration. Branch migration allows RuvC to scan DNA until it finds its consensus sequence, where it cleaves and resolves cruciform DNA. The protein is Holliday junction branch migration complex subunit RuvB of Bacteroides fragilis (strain ATCC 25285 / DSM 2151 / CCUG 4856 / JCM 11019 / LMG 10263 / NCTC 9343 / Onslow / VPI 2553 / EN-2).